Consider the following 638-residue polypeptide: 2-isopropylmalate synthase (638 aa).

The region spanning Pro72–Pro346 is the Pyruvate carboxyltransferase domain. Asp81, His285, His287, and Asn321 together coordinate Mg(2+). Residues Val488–Arg638 form a regulatory domain region.

Belongs to the alpha-IPM synthase/homocitrate synthase family. LeuA type 2 subfamily. In terms of assembly, homodimer. Mg(2+) is required as a cofactor.

Its subcellular location is the cytoplasm. The enzyme catalyses 3-methyl-2-oxobutanoate + acetyl-CoA + H2O = (2S)-2-isopropylmalate + CoA + H(+). It participates in amino-acid biosynthesis; L-leucine biosynthesis; L-leucine from 3-methyl-2-oxobutanoate: step 1/4. In terms of biological role, catalyzes the condensation of the acetyl group of acetyl-CoA with 3-methyl-2-oxobutanoate (2-ketoisovalerate) to form 3-carboxy-3-hydroxy-4-methylpentanoate (2-isopropylmalate). The polypeptide is 2-isopropylmalate synthase (Bifidobacterium longum subsp. infantis (strain ATCC 15697 / DSM 20088 / JCM 1222 / NCTC 11817 / S12)).